The sequence spans 167 residues: MVKAIDIKKEQVAEITDKLQRSASAIVVDYRGLKVEEVTELRKQCREKGLEYKVYKNTLTRLAAENAGMKELVGELVGPNAIVFSYDDPVAAAKVASEFAKTHKNLELKAGLVEGVLYKDAQLEEFASIPSREVLIAKLLGSFKAPISNFAYLIKAIADKKEAEGQA.

It belongs to the universal ribosomal protein uL10 family. As to quaternary structure, part of the ribosomal stalk of the 50S ribosomal subunit. The N-terminus interacts with L11 and the large rRNA to form the base of the stalk. The C-terminus forms an elongated spine to which L12 dimers bind in a sequential fashion forming a multimeric L10(L12)X complex.

Forms part of the ribosomal stalk, playing a central role in the interaction of the ribosome with GTP-bound translation factors. The protein is Large ribosomal subunit protein uL10 of Alkaliphilus oremlandii (strain OhILAs) (Clostridium oremlandii (strain OhILAs)).